A 394-amino-acid polypeptide reads, in one-letter code: Elongation factor Tu (394 aa).

The region spanning lysine 10 to isoleucine 204 is the tr-type G domain. A G1 region spans residues glycine 19–threonine 26. Glycine 19–threonine 26 serves as a coordination point for GTP. A Mg(2+)-binding site is contributed by threonine 26. Positions glycine 60–serine 64 are G2. The segment at aspartate 81–glycine 84 is G3. GTP-binding positions include aspartate 81 to histidine 85 and asparagine 136 to aspartate 139. The segment at asparagine 136 to aspartate 139 is G4. The interval serine 174 to leucine 176 is G5.

Belongs to the TRAFAC class translation factor GTPase superfamily. Classic translation factor GTPase family. EF-Tu/EF-1A subfamily. In terms of assembly, monomer.

It localises to the cytoplasm. The catalysed reaction is GTP + H2O = GDP + phosphate + H(+). Its function is as follows. GTP hydrolase that promotes the GTP-dependent binding of aminoacyl-tRNA to the A-site of ribosomes during protein biosynthesis. In Rickettsia typhi (strain ATCC VR-144 / Wilmington), this protein is Elongation factor Tu.